A 312-amino-acid polypeptide reads, in one-letter code: Ribosomal RNA small subunit methyltransferase H (312 aa).

Residues 35 to 37 (GGH), Asp-55, Phe-79, Asp-101, and Gln-108 each bind S-adenosyl-L-methionine.

It belongs to the methyltransferase superfamily. RsmH family.

The protein resides in the cytoplasm. The catalysed reaction is cytidine(1402) in 16S rRNA + S-adenosyl-L-methionine = N(4)-methylcytidine(1402) in 16S rRNA + S-adenosyl-L-homocysteine + H(+). Its function is as follows. Specifically methylates the N4 position of cytidine in position 1402 (C1402) of 16S rRNA. The polypeptide is Ribosomal RNA small subunit methyltransferase H (Glaesserella parasuis serovar 5 (strain SH0165) (Haemophilus parasuis)).